The following is a 337-amino-acid chain: Meiotic driver wtf4 (337 aa).

Residues 1-29 (MKNKDYPLRSSMDELSTKNDNEIDLEKGP) are compositionally biased toward basic and acidic residues. The disordered stretch occupies residues 1–40 (MKNKDYPLRSSMDELSTKNDNEIDLEKGPLPEYNSEDEST). 6 helical membrane passes run 89 to 109 (LLIS…CVNP), 119 to 139 (AFFV…FCFF), 149 to 169 (CIKV…VGLY), 176 to 196 (VVII…RSKF), 210 to 230 (CSIS…FWTL), and 234 to 254 (FSGL…TKGL).

Belongs to the WTF family. Homomer. Forms protein aggregates. The two isoforms can interact with each other and with themselves. High sequence similarity is required for their interaction.

The protein localises to the spore membrane. The protein resides in the vacuole membrane. Its subcellular location is the ascus epiplasm. It localises to the cytoplasm. It is found in the endoplasmic reticulum membrane. Promotes unequal transmission of alleles from the parental zygote to progeny spores by acting as poison/antidote system where the poison and antidote proteins are produced from the same locus; the poison component is trans-acting and targets all spores within an ascus whereas the antidote component is spore-specific, leading to poisoning of all progeny that do not inherit the allele. Functionally, localizes isoform 2 to the vacuole thereby facilitating its degradation. In terms of biological role, forms toxic aggregates that disrupt spore maturation. The chain is Meiotic driver wtf4 from Schizosaccharomyces kambucha (Fission yeast).